A 251-amino-acid polypeptide reads, in one-letter code: Triosephosphate isomerase (251 aa).

9–11 contributes to the substrate binding site; that stretch reads NWK. The active-site Electrophile is the H95. Residue E167 is the Proton acceptor of the active site. Residues G173, S213, and 234–235 each bind substrate; that span reads GG. S213 is subject to Phosphoserine.

It belongs to the triosephosphate isomerase family. Homodimer.

Its subcellular location is the cytoplasm. It carries out the reaction D-glyceraldehyde 3-phosphate = dihydroxyacetone phosphate. Its pathway is carbohydrate biosynthesis; gluconeogenesis. The protein operates within carbohydrate degradation; glycolysis; D-glyceraldehyde 3-phosphate from glycerone phosphate: step 1/1. Involved in the gluconeogenesis. Catalyzes stereospecifically the conversion of dihydroxyacetone phosphate (DHAP) to D-glyceraldehyde-3-phosphate (G3P). The sequence is that of Triosephosphate isomerase from Halalkalibacterium halodurans (strain ATCC BAA-125 / DSM 18197 / FERM 7344 / JCM 9153 / C-125) (Bacillus halodurans).